The primary structure comprises 146 residues: Large ribosomal subunit protein uL15 (146 aa).

The interval 1–51 (MKLHELQPAAGSRKVRNRVGRGTSSGNGKTAGRGQKGQKARSGGGVRLGFE) is disordered. Composition is skewed to gly residues over residues 23–35 (TSSG…GRGQ) and 42–51 (SGGGVRLGFE).

The protein belongs to the universal ribosomal protein uL15 family. Part of the 50S ribosomal subunit.

In terms of biological role, binds to the 23S rRNA. The polypeptide is Large ribosomal subunit protein uL15 (Streptococcus gordonii (strain Challis / ATCC 35105 / BCRC 15272 / CH1 / DL1 / V288)).